Reading from the N-terminus, the 156-residue chain is Succinate dehydrogenase assembly factor 2-B, mitochondrial (156 aa).

The transit peptide at 1–12 directs the protein to the mitochondrion; sequence MLRQILSSAVAK.

Belongs to the SDHAF2 family. As to quaternary structure, interacts with the flavoprotein subunit within the SDH catalytic dimer.

The protein localises to the mitochondrion matrix. Plays an essential role in the assembly of succinate dehydrogenase (SDH), an enzyme complex (also referred to as respiratory complex II) that is a component of both the tricarboxylic acid (TCA) cycle and the mitochondrial electron transport chain, and which couples the oxidation of succinate to fumarate with the reduction of ubiquinone (coenzyme Q) to ubiquinol. Required for flavinylation (covalent attachment of FAD) of the flavoprotein subunit of the SDH catalytic dimer. This chain is Succinate dehydrogenase assembly factor 2-B, mitochondrial, found in Drosophila willistoni (Fruit fly).